Consider the following 185-residue polypeptide: Hypoxanthine/guanine phosphoribosyltransferase (185 aa).

The protein belongs to the purine/pyrimidine phosphoribosyltransferase family. Archaeal HPRT subfamily. As to quaternary structure, homodimer.

Its subcellular location is the cytoplasm. It catalyses the reaction IMP + diphosphate = hypoxanthine + 5-phospho-alpha-D-ribose 1-diphosphate. It carries out the reaction GMP + diphosphate = guanine + 5-phospho-alpha-D-ribose 1-diphosphate. It participates in purine metabolism; IMP biosynthesis via salvage pathway; IMP from hypoxanthine: step 1/1. Functionally, catalyzes a salvage reaction resulting in the formation of IMP that is energically less costly than de novo synthesis. This Methanococcus vannielii (strain ATCC 35089 / DSM 1224 / JCM 13029 / OCM 148 / SB) protein is Hypoxanthine/guanine phosphoribosyltransferase.